Consider the following 87-residue polypeptide: Small ribosomal subunit protein bS20 (87 aa).

Positions 1–11 (MANIKSAKKRA) are enriched in basic residues. The disordered stretch occupies residues 1–27 (MANIKSAKKRAVQSEKRRQHNASQRSM).

This sequence belongs to the bacterial ribosomal protein bS20 family.

Functionally, binds directly to 16S ribosomal RNA. This chain is Small ribosomal subunit protein bS20, found in Actinobacillus succinogenes (strain ATCC 55618 / DSM 22257 / CCUG 43843 / 130Z).